Reading from the N-terminus, the 338-residue chain is UPF0252 protein PF1496 (338 aa).

The chain crosses the membrane as a helical span at residues 100 to 120; it reads ILSMLFLVFILFPAFTSHIWS.

Belongs to the UPF0252 family.

The protein localises to the membrane. The chain is UPF0252 protein PF1496 from Pyrococcus furiosus (strain ATCC 43587 / DSM 3638 / JCM 8422 / Vc1).